The chain runs to 110 residues: UPF0367 protein Syncc9605_2376 (110 aa).

The protein belongs to the UPF0367 family.

In Synechococcus sp. (strain CC9605), this protein is UPF0367 protein Syncc9605_2376.